Reading from the N-terminus, the 445-residue chain is Tubby-like F-box protein 14 (445 aa).

The 59-residue stretch at 56–114 (SSCWANLPPELLRDVIERLEASEAAWPSRKNVVACAAVCRTWRDMCREIVKNPEFCGKI) folds into the F-box domain.

The protein belongs to the TUB family. Ubiquitous.

This Oryza sativa subsp. japonica (Rice) protein is Tubby-like F-box protein 14 (TULP14).